A 617-amino-acid polypeptide reads, in one-letter code: Membrane protein insertase YidC (617 aa).

The helical transmembrane segment at 8–28 (MFVAIGLSLLVLLGWQYFVAG) threads the bilayer. The span at 36–49 (QIEAQNKAAQQQPP) shows a compositional bias: polar residues. A disordered region spans residues 36 to 91 (QIEAQNKAAQQQPPGVTPDGVPSPSPKEGGPAAPAPGTLPTAQGGPVSREAALARS). The span at 61–81 (PKEGGPAAPAPGTLPTAQGGP) shows a compositional bias: low complexity. The next 4 helical transmembrane spans lie at 387 to 407 (LFGN…LLFL), 461 to 481 (WPVL…FITI), 517 to 533 (FVHL…TMFV), and 549 to 569 (IFTF…AGLV).

This sequence belongs to the OXA1/ALB3/YidC family. Type 1 subfamily. As to quaternary structure, interacts with the Sec translocase complex via SecD. Specifically interacts with transmembrane segments of nascent integral membrane proteins during membrane integration.

The protein localises to the cell inner membrane. Its function is as follows. Required for the insertion and/or proper folding and/or complex formation of integral membrane proteins into the membrane. Involved in integration of membrane proteins that insert both dependently and independently of the Sec translocase complex, as well as at least some lipoproteins. Aids folding of multispanning membrane proteins. This chain is Membrane protein insertase YidC, found in Methylobacterium radiotolerans (strain ATCC 27329 / DSM 1819 / JCM 2831 / NBRC 15690 / NCIMB 10815 / 0-1).